A 450-amino-acid chain; its full sequence is Glutamyl-tRNA reductase (450 aa).

Substrate contacts are provided by residues 45 to 48, S107, 112 to 114, and Q118; these read TCNR and ERE. Residue C46 is the Nucleophile of the active site. 196 to 201 lines the NADP(+) pocket; that stretch reads GTGAYA.

The protein belongs to the glutamyl-tRNA reductase family. As to quaternary structure, homodimer.

The enzyme catalyses (S)-4-amino-5-oxopentanoate + tRNA(Glu) + NADP(+) = L-glutamyl-tRNA(Glu) + NADPH + H(+). It participates in porphyrin-containing compound metabolism; protoporphyrin-IX biosynthesis; 5-aminolevulinate from L-glutamyl-tRNA(Glu): step 1/2. Functionally, catalyzes the NADPH-dependent reduction of glutamyl-tRNA(Glu) to glutamate 1-semialdehyde (GSA). In Micrococcus luteus (strain ATCC 4698 / DSM 20030 / JCM 1464 / CCM 169 / CCUG 5858 / IAM 1056 / NBRC 3333 / NCIMB 9278 / NCTC 2665 / VKM Ac-2230) (Micrococcus lysodeikticus), this protein is Glutamyl-tRNA reductase.